The sequence spans 324 residues: Fructose-1,6-bisphosphatase class 1 (324 aa).

4 residues coordinate Mg(2+): Glu88, Asp107, Leu109, and Asp110. Substrate contacts are provided by residues 110–113, Asn199, and Lys265; that span reads DGSS. Glu271 contacts Mg(2+).

The protein belongs to the FBPase class 1 family. In terms of assembly, homotetramer. Mg(2+) is required as a cofactor.

The protein resides in the cytoplasm. The enzyme catalyses beta-D-fructose 1,6-bisphosphate + H2O = beta-D-fructose 6-phosphate + phosphate. It participates in carbohydrate biosynthesis; gluconeogenesis. This Neisseria meningitidis serogroup A / serotype 4A (strain DSM 15465 / Z2491) protein is Fructose-1,6-bisphosphatase class 1.